Consider the following 455-residue polypeptide: Probable alpha-galactosidase B (455 aa).

An N-terminal signal peptide occupies residues 1–16 (MIEFLALITLISRANA). 2 disulfides stabilise this stretch: Cys39–Cys71 and Cys121–Cys151. Residue Asn42 is glycosylated (N-linked (GlcNAc...) asparagine). Residue Asp149 is the Nucleophile of the active site. N-linked (GlcNAc...) asparagine glycans are attached at residues Asn177 and Asn192. 222-226 (NWGNA) lines the substrate pocket. Residue Asp244 is the Proton donor of the active site. Asn395 carries an N-linked (GlcNAc...) asparagine glycan.

It belongs to the glycosyl hydrolase 27 family.

The protein localises to the secreted. It carries out the reaction Hydrolysis of terminal, non-reducing alpha-D-galactose residues in alpha-D-galactosides, including galactose oligosaccharides, galactomannans and galactolipids.. Its function is as follows. Hydrolyzes a variety of simple alpha-D-galactoside as well as more complex molecules such as oligosaccharides and polysaccharides. This Emericella nidulans (strain FGSC A4 / ATCC 38163 / CBS 112.46 / NRRL 194 / M139) (Aspergillus nidulans) protein is Probable alpha-galactosidase B (aglB).